The primary structure comprises 178 residues: Killin (178 aa).

A DNA-binding region spans residues Ser8 to Trp50.

It localises to the nucleus. Functionally, DNA-binding protein involved in S phase checkpoint control-coupled apoptosis by mediating p53/TP53-induced apoptosis. Has the ability to inhibit DNA synthesis and S phase arrest coupled to apoptosis. Has affinity to both double- and single-stranded DNA. The protein is Killin (KLLN) of Homo sapiens (Human).